The sequence spans 310 residues: Malate dehydrogenase (310 aa).

NAD(+) is bound by residues 7 to 12 (GAGHVG) and Asp-32. The substrate site is built by Arg-81 and Arg-87. Residues Asn-94 and 117-119 (VSN) each bind NAD(+). Positions 119 and 150 each coordinate substrate. The Proton acceptor role is filled by His-174.

This sequence belongs to the LDH/MDH superfamily. MDH type 3 family.

The catalysed reaction is (S)-malate + NAD(+) = oxaloacetate + NADH + H(+). Catalyzes the reversible oxidation of malate to oxaloacetate. The sequence is that of Malate dehydrogenase from Chlorobium phaeobacteroides (strain BS1).